We begin with the raw amino-acid sequence, 136 residues long: Nucleoside diphosphate kinase (136 aa).

ATP-binding residues include Lys-10, Phe-58, Arg-86, Thr-92, Arg-104, and Asn-114. His-117 acts as the Pros-phosphohistidine intermediate in catalysis.

The protein belongs to the NDK family. As to quaternary structure, homotetramer. Mg(2+) serves as cofactor.

It is found in the cytoplasm. It carries out the reaction a 2'-deoxyribonucleoside 5'-diphosphate + ATP = a 2'-deoxyribonucleoside 5'-triphosphate + ADP. It catalyses the reaction a ribonucleoside 5'-diphosphate + ATP = a ribonucleoside 5'-triphosphate + ADP. Functionally, major role in the synthesis of nucleoside triphosphates other than ATP. The ATP gamma phosphate is transferred to the NDP beta phosphate via a ping-pong mechanism, using a phosphorylated active-site intermediate. This is Nucleoside diphosphate kinase from Mycobacterium leprae (strain TN).